The following is a 144-amino-acid chain: Bacilliredoxin BLi02323/BL05224 (144 aa).

It belongs to the bacilliredoxin family.

The sequence is that of Bacilliredoxin BLi02323/BL05224 from Bacillus licheniformis (strain ATCC 14580 / DSM 13 / JCM 2505 / CCUG 7422 / NBRC 12200 / NCIMB 9375 / NCTC 10341 / NRRL NRS-1264 / Gibson 46).